The primary structure comprises 309 residues: Ribosomal protein L11 methyltransferase (309 aa).

S-adenosyl-L-methionine is bound by residues Thr-160, Gly-181, Asp-203, and Asn-245.

Belongs to the methyltransferase superfamily. PrmA family.

The protein resides in the cytoplasm. It carries out the reaction L-lysyl-[protein] + 3 S-adenosyl-L-methionine = N(6),N(6),N(6)-trimethyl-L-lysyl-[protein] + 3 S-adenosyl-L-homocysteine + 3 H(+). Methylates ribosomal protein L11. This is Ribosomal protein L11 methyltransferase from Caldanaerobacter subterraneus subsp. tengcongensis (strain DSM 15242 / JCM 11007 / NBRC 100824 / MB4) (Thermoanaerobacter tengcongensis).